A 360-amino-acid chain; its full sequence is Phospho-N-acetylmuramoyl-pentapeptide-transferase (360 aa).

Topologically, residues 1 to 25 (MLVWLAEHLVKYYSGFNVFSYLTFR) are periplasmic. Residues 26–46 (AIVSLLTALFISLWMGPRMIA) traverse the membrane as a helical segment. The Cytoplasmic portion of the chain corresponds to 47–71 (HLQKLSFGQVVRNDGPESHFSKRGT). The chain crosses the membrane as a helical span at residues 72–92 (PTMGGIMILTAIVISVLLWAY). P93 is a topological domain (periplasmic). Residues 94–114 (SNPYVWCVLVVLVGYGVIGFV) form a helical membrane-spanning segment. Residues 115–131 (DDYRKVVRKDTKGLIAR) lie on the Cytoplasmic side of the membrane. The chain crosses the membrane as a helical span at residues 132–152 (WKYFWMSVIALGVAFALYLAG). The Periplasmic segment spans residues 153–167 (KDTPATQLVVPFFKD). Residues 168–188 (VMPQLGLFYILLAYFVIVGTG) form a helical membrane-spanning segment. Over 189–198 (NAVNLTDGLD) the chain is Cytoplasmic. Residues 199–219 (GLAIMPTVFVAGGFALVAWAT) form a helical membrane-spanning segment. Over 220-235 (GNMNFASYLHIPYLRH) the chain is Periplasmic. A helical transmembrane segment spans residues 236 to 256 (AGELVIVCTAIVGAGLGFLWF). Over 257 to 262 (NTYPAQ) the chain is Cytoplasmic. The chain crosses the membrane as a helical span at residues 263 to 283 (VFMGDVGSLALGGALGIIAVL). Over 284–287 (LRQE) the chain is Periplasmic. The chain crosses the membrane as a helical span at residues 288 to 308 (FLLVIMGGVFVVETLSVILQV). The Cytoplasmic portion of the chain corresponds to 309-337 (GSFKLRGQRIFRMAPIHHHYELKGWPEPR). The helical transmembrane segment at 338 to 358 (VIVRFWIISLMLVLIGLATLK) threads the bilayer. The Periplasmic segment spans residues 359 to 360 (VR).

It belongs to the glycosyltransferase 4 family. MraY subfamily. Mg(2+) is required as a cofactor.

It is found in the cell inner membrane. The enzyme catalyses UDP-N-acetyl-alpha-D-muramoyl-L-alanyl-gamma-D-glutamyl-meso-2,6-diaminopimeloyl-D-alanyl-D-alanine + di-trans,octa-cis-undecaprenyl phosphate = di-trans,octa-cis-undecaprenyl diphospho-N-acetyl-alpha-D-muramoyl-L-alanyl-D-glutamyl-meso-2,6-diaminopimeloyl-D-alanyl-D-alanine + UMP. The protein operates within cell wall biogenesis; peptidoglycan biosynthesis. Catalyzes the initial step of the lipid cycle reactions in the biosynthesis of the cell wall peptidoglycan: transfers peptidoglycan precursor phospho-MurNAc-pentapeptide from UDP-MurNAc-pentapeptide onto the lipid carrier undecaprenyl phosphate, yielding undecaprenyl-pyrophosphoryl-MurNAc-pentapeptide, known as lipid I. In Shigella boydii serotype 18 (strain CDC 3083-94 / BS512), this protein is Phospho-N-acetylmuramoyl-pentapeptide-transferase.